We begin with the raw amino-acid sequence, 659 residues long: MGKYSVLMIFIASSLLIVLQNVEIVNAVGCTGSFFNGNSSYAQNRRDLFSTLPNKVVTNGGFYNSSLGKSPNIVHAVALCGRGYEQQACIRCVDSAIQGILTTTSCLNRVDSFTWDKDEEDNVSCLVSTSNHSTFGNLELRPSVRYQSPNSIEPSKNMTLFEQEWNAMANRTVESATEAETSSVLKYYSAEKAEFTEFPNVYMLMQCTPDITSQDCKTCLGECVTLFKEQVWGRQGGEVYRPSCFFRWDLYAFHGAFDNVTRVPAPPRPQAQGNESSITKKKGRSIGYGGIIAIVVVLTFINILVFIGYIKVYGRRKESYNKINVGSAEYSDSDGQFMLRFDLGMVLAATDEFSSENTLGQGGFGTVYKGTLLNGQEVAVKRLTKGSGQGDIEFKNEVSLLTRLQHRNLVKLLGFCNEGDEQILVYEFVPNSSLDHFIFDDEKRSLLTWEMRYRIIEGIARGLLYLHEDSQLKIIHRDLKASNILLDAEMNPKVADFGTARLFDSDETRAETKRIAGTRGYMAPEYLNHGQISAKSDVYSFGVMLLEMISGERNNSFEGEGLAAFAWKRWVEGKPEIIIDPFLIEKPRNEIIKLIQIGLLCVQENPTKRPTMSSVIIWLGSETNIIPLPKAPAFTGSRSQSEIGAMSMSDDVFTELSCR.

The first 27 residues, 1–27 (MGKYSVLMIFIASSLLIVLQNVEIVNA), serve as a signal peptide directing secretion. Gnk2-homologous domains follow at residues 28 to 134 (VGCT…NHST) and 142 to 253 (PSVR…LYAF). The Extracellular portion of the chain corresponds to 28–289 (VGCTGSFFNG…KKKGRSIGYG (262 aa)). N-linked (GlcNAc...) asparagine glycans are attached at residues asparagine 38, asparagine 64, asparagine 122, asparagine 131, asparagine 157, asparagine 170, asparagine 259, and asparagine 274. Residues 290-310 (GIIAIVVVLTFINILVFIGYI) traverse the membrane as a helical segment. Over 311–659 (KVYGRRKESY…DDVFTELSCR (349 aa)) the chain is Cytoplasmic. A Protein kinase domain is found at 353–619 (FSSENTLGQG…PTMSSVIIWL (267 aa)). ATP contacts are provided by residues 359 to 367 (LGQGGFGTV) and lysine 381. Phosphotyrosine is present on tyrosine 426. The Proton acceptor role is filled by aspartate 478. A Phosphoserine modification is found at serine 482. A Phosphothreonine modification is found at threonine 518. Tyrosine 526 is modified (phosphotyrosine).

Belongs to the protein kinase superfamily. Ser/Thr protein kinase family. CRK subfamily.

It is found in the membrane. The catalysed reaction is L-seryl-[protein] + ATP = O-phospho-L-seryl-[protein] + ADP + H(+). It carries out the reaction L-threonyl-[protein] + ATP = O-phospho-L-threonyl-[protein] + ADP + H(+). The sequence is that of Putative cysteine-rich receptor-like protein kinase 39 (CRK39) from Arabidopsis thaliana (Mouse-ear cress).